We begin with the raw amino-acid sequence, 171 residues long: Lipoprotein signal peptidase (171 aa).

A run of 3 helical transmembrane segments spans residues 7–27 (GLLA…GLYF), 64–84 (IGRW…GLWM), and 88–108 (TSRL…GNAI). Catalysis depends on residues Asp118 and Asp136. The chain crosses the membrane as a helical span at residues 128 to 148 (SWYVFNVADAAIVAGVIGLIL).

This sequence belongs to the peptidase A8 family.

It is found in the cell inner membrane. It catalyses the reaction Release of signal peptides from bacterial membrane prolipoproteins. Hydrolyzes -Xaa-Yaa-Zaa-|-(S,diacylglyceryl)Cys-, in which Xaa is hydrophobic (preferably Leu), and Yaa (Ala or Ser) and Zaa (Gly or Ala) have small, neutral side chains.. The protein operates within protein modification; lipoprotein biosynthesis (signal peptide cleavage). This protein specifically catalyzes the removal of signal peptides from prolipoproteins. This Methylobacterium radiotolerans (strain ATCC 27329 / DSM 1819 / JCM 2831 / NBRC 15690 / NCIMB 10815 / 0-1) protein is Lipoprotein signal peptidase.